Here is a 383-residue protein sequence, read N- to C-terminus: Erythronate-4-phosphate dehydrogenase (383 aa).

The substrate site is built by Ser-45 and Thr-66. Residues Asp-146 and Thr-175 each coordinate NAD(+). Arg-208 is an active-site residue. Position 232 (Asp-232) interacts with NAD(+). The active site involves Glu-237. His-254 serves as the catalytic Proton donor. NAD(+) is bound at residue Gly-257.

The protein belongs to the D-isomer specific 2-hydroxyacid dehydrogenase family. PdxB subfamily. In terms of assembly, homodimer.

The protein resides in the cytoplasm. It carries out the reaction 4-phospho-D-erythronate + NAD(+) = (R)-3-hydroxy-2-oxo-4-phosphooxybutanoate + NADH + H(+). Its pathway is cofactor biosynthesis; pyridoxine 5'-phosphate biosynthesis; pyridoxine 5'-phosphate from D-erythrose 4-phosphate: step 2/5. Its function is as follows. Catalyzes the oxidation of erythronate-4-phosphate to 3-hydroxy-2-oxo-4-phosphonooxybutanoate. This Chromohalobacter salexigens (strain ATCC BAA-138 / DSM 3043 / CIP 106854 / NCIMB 13768 / 1H11) protein is Erythronate-4-phosphate dehydrogenase.